Reading from the N-terminus, the 192-residue chain is Probable GTP-binding protein EngB (192 aa).

The 171-residue stretch at 22–192 (GRPEIVFVGR…LLASIDTFTQ (171 aa)) folds into the EngB-type G domain. GTP contacts are provided by residues 30–37 (GRSNVGKS), 57–61 (GKTRL), 75–78 (DLPG), 142–145 (TKWD), and 172–174 (YSS). Mg(2+) is bound by residues S37 and T59.

Belongs to the TRAFAC class TrmE-Era-EngA-EngB-Septin-like GTPase superfamily. EngB GTPase family. The cofactor is Mg(2+).

Functionally, necessary for normal cell division and for the maintenance of normal septation. This is Probable GTP-binding protein EngB from Chlorobaculum tepidum (strain ATCC 49652 / DSM 12025 / NBRC 103806 / TLS) (Chlorobium tepidum).